The following is a 1117-amino-acid chain: Centrosomal protein of 126 kDa (1117 aa).

A disordered region spans residues 1–42 (MLAGRPGTRSAVGELGTESSDNLDRAPLGPRESGGHHRPGSY). The stretch at 49–121 (LEKNLEEERQ…EEVTEKFQRA (73 aa)) forms a coiled coil. 2 disordered regions span residues 643-664 (AENS…QQFH) and 730-759 (KKEE…IIRK). Positions 730–744 (KKEESKIPVHDDSKT) are enriched in basic and acidic residues. Basic residues predominate over residues 745–758 (KQGKPQRGRAKIIR).

In terms of assembly, interacts with DCTN1. Expressed in brain, lung, skeletal muscle, kidney, pancreas, testis and ovary.

It localises to the midbody. The protein resides in the cytoplasm. The protein localises to the cytoskeleton. It is found in the microtubule organizing center. Its subcellular location is the centrosome. It localises to the cilium basal body. Functionally, participates in cytokinesis. Necessary for microtubules and mitotic spindle organization. Involved in primary cilium formation. This is Centrosomal protein of 126 kDa from Homo sapiens (Human).